A 680-amino-acid chain; its full sequence is DNA-directed RNA polymerase subunit beta' (680 aa).

Positions 68, 70, 86, and 89 each coordinate Zn(2+). The Mg(2+) site is built by aspartate 488, aspartate 490, and aspartate 492.

This sequence belongs to the RNA polymerase beta' chain family. RpoC1 subfamily. As to quaternary structure, in plastids the minimal PEP RNA polymerase catalytic core is composed of four subunits: alpha, beta, beta', and beta''. When a (nuclear-encoded) sigma factor is associated with the core the holoenzyme is formed, which can initiate transcription. Mg(2+) serves as cofactor. The cofactor is Zn(2+).

Its subcellular location is the plastid. It localises to the chloroplast. The enzyme catalyses RNA(n) + a ribonucleoside 5'-triphosphate = RNA(n+1) + diphosphate. Its function is as follows. DNA-dependent RNA polymerase catalyzes the transcription of DNA into RNA using the four ribonucleoside triphosphates as substrates. This Nicotiana tabacum (Common tobacco) protein is DNA-directed RNA polymerase subunit beta'.